The primary structure comprises 514 residues: Putative ribose/galactose/methyl galactoside import ATP-binding protein 3 (514 aa).

ABC transporter domains follow at residues 21–256 (LRLD…VGRT) and 267–512 (VPTD…SGRS). Residue 53–60 (GENGAGKS) participates in ATP binding.

The protein belongs to the ABC transporter superfamily. Carbohydrate importer 2 (CUT2) (TC 3.A.1.2) family.

The protein resides in the cell inner membrane. The catalysed reaction is D-ribose(out) + ATP + H2O = D-ribose(in) + ADP + phosphate + H(+). The enzyme catalyses D-galactose(out) + ATP + H2O = D-galactose(in) + ADP + phosphate + H(+). Functionally, part of an ABC transporter complex involved in carbohydrate import. Could be involved in ribose, galactose and/or methyl galactoside import. Responsible for energy coupling to the transport system. The sequence is that of Putative ribose/galactose/methyl galactoside import ATP-binding protein 3 from Burkholderia cenocepacia (strain HI2424).